The sequence spans 141 residues: Chorion protein S16 (141 aa).

The N-terminal stretch at 1–22 (MSANNMRLLCLLLACYISAIVA) is a signal peptide.

The protein belongs to the chorion protein S16 family.

The protein resides in the secreted. Its function is as follows. Chorion membrane (egg shell) protein; plays a role in protecting the egg from the environment. The chain is Chorion protein S16 (Cp16) from Drosophila subobscura (Fruit fly).